A 1113-amino-acid chain; its full sequence is Protein KIBRA (1113 aa).

2 WW domains span residues 6–39 and 53–86; these read LPLP…DPRD and DELP…DPRV. Coiled-coil stretches lie at residues 107-193 and 293-431; these read LSAQ…RGFQ and NSNN…SSMQ. At serine 141 the chain carries Phosphoserine. Disordered regions lie at residues 429–448 and 522–547; these read SMQS…SRGS and RSLS…SPPC. A compositionally biased stretch (polar residues) spans 522 to 532; it reads RSLSGTPKSMT. Residues 533–542 are compositionally biased toward low complexity; the sequence is SLSPRSSLSS. Residue serine 535 is modified to Phosphoserine. Phosphoserine; by CDK1 is present on serine 542. The C2 domain occupies 658-781; it reads GATRIQIALK…RSGERSTRWY (124 aa). Positions 825–975 are disordered; that stretch reads LEKRQEGRSS…RSVRMKRPSS (151 aa). The tract at residues 839-1113 is interaction with histone H3; sequence EDSWRYEETS…NIPALSADDV (275 aa). Positions 847–870 are enriched in acidic residues; the sequence is TSENEAVAEEEEEEVEEEEGEEDV. Position 899 is a phosphoserine (serine 899). At threonine 912 the chain carries Phosphothreonine. The segment covering 924 to 938 has biased composition (polar residues); it reads IIRSKTFSPGPQSQY. A Phosphoserine modification is found at serine 927. Threonine 929 is modified (phosphothreonine). The residue at position 931 (serine 931) is a Phosphoserine; by CDK1. Phosphoserine is present on serine 947. Interaction with PRKCZ stretches follow at residues 953-996 and 956-975; these read SKKP…LDLQ and PPFV…RPSS. Residues serine 975 and serine 978 each carry the phosphoserine; by PKC/PRKCZ modification. Residues 1001–1032 adopt a coiled-coil conformation; it reads WHSQLTQEISVLKELKEQLEQAKSHGEKELPQ. The ADDV motif signature appears at 1111–1113; it reads DDV.

Belongs to the WWC family. KIBRA subfamily. As to quaternary structure, homodimer. Forms heterodimers with WWC2 and WWC3. Interacts with DDN. Interacts with DYNLL1 and histone H3. The interaction with DYNLL1 is mandatory for the recruitment and transactivation functions of ESR1 or DYNLL1 to the target chromatin and the interaction with histone H3 ensures proper regulatory interaction of WWC1-DYNLL1-ESR1 complexes with target chromatin. Interacts (via WW domains) with DDR1 (via PPxY motif) in a collagen-regulated manner. Interacts with PRKCZ (via the protein kinase domain). Forms a tripartite complex with DDR1 and PRKCZ, but predominantly in the absence of collagen. Interacts (via the ADDV motif) with PATJ (via PDZ domain 8). Interacts (via WW domains) with SYNPO (via PPxY motifs). Interacts with NF2 and SNX4. Interacts with DLC1 and PRKCZ. Interacts (via WW domains) with LATS1 and LATS2. In terms of processing, phosphorylation at Ser-542 and Ser-931 by CDK1 in response to spindle damage stress regulates mitotic exit, these two sites are dephosphorylated by CDC14B. As to expression, expressed in mammary epithelial cells and breast cancer cell lines. Found in the luminal epithelium surrounding the ducts in the normal breast. In the brain, expressed in somatodendritic compartment of neurons in the cortex and hippocampus and in the cerebellum it is found in the Purkinje cells and some granule cells (at protein level). Detected in brain, heart, colon and kidney. In the kidney, expressed in glomerular podocytes, in some tubules and in the collecting duct.

It localises to the cytoplasm. Its subcellular location is the perinuclear region. The protein resides in the nucleus. The protein localises to the cell projection. It is found in the ruffle membrane. It localises to the cytosol. Functionally, regulator of the Hippo signaling pathway, also known as the Salvador-Warts-Hippo (SWH) pathway. Enhances phosphorylation of LATS1 and YAP1 and negatively regulates cell proliferation and organ growth due to a suppression of the transcriptional activity of YAP1, the major effector of the Hippo pathway. Along with NF2 can synergistically induce the phosphorylation of LATS1 and LATS2 and function in the regulation of Hippo signaling pathway. Acts as a transcriptional coactivator of ESR1 which plays an essential role in DYNLL1-mediated ESR1 transactivation. Regulates collagen-stimulated activation of the ERK/MAPK cascade. Modulates directional migration of podocytes. Plays a role in cognition and memory performance. Plays an important role in regulating AMPA-selective glutamate receptors (AMPARs) trafficking underlying synaptic plasticity and learning. The sequence is that of Protein KIBRA from Homo sapiens (Human).